Here is a 477-residue protein sequence, read N- to C-terminus: Glycogen synthase (477 aa).

Lys15 is a binding site for ADP-alpha-D-glucose.

This sequence belongs to the glycosyltransferase 1 family. Bacterial/plant glycogen synthase subfamily.

The catalysed reaction is [(1-&gt;4)-alpha-D-glucosyl](n) + ADP-alpha-D-glucose = [(1-&gt;4)-alpha-D-glucosyl](n+1) + ADP + H(+). Its pathway is glycan biosynthesis; glycogen biosynthesis. Its function is as follows. Synthesizes alpha-1,4-glucan chains using ADP-glucose. The polypeptide is Glycogen synthase (Mannheimia succiniciproducens (strain KCTC 0769BP / MBEL55E)).